We begin with the raw amino-acid sequence, 416 residues long: MAAILLTTRPKVPVSFEDVSVYFTKTEWKLLDLRQKVLYKRVMLENYSHLVSLGFSFSKPHLISQLERGEGPWVADIPRTWATAGLHIGDRTQSKTSTSTQKHSGRQLPGADPQGGKEGQAARSSVLQRGAQGLGQSSAAGPQGPKGAEKRYLCQQCGKAFSRSSNLIKHRIIHSGEKPYACPECGKLFRRSFALLEHQRIHSGEKPYACPECSKTFTRSSNLIKHQVIHSGERPFACGDCGKLFRRSFALLEHARVHSGERPYACPECGKAFSRSSNLIEHQRTHRGEKPYACGQCAKAFKGVSQLIHHQRSHSGERPFACRECGKAFRGRSGLSQHRRVHSGEKPYECSDCGKAFGRRANLFKHQAVHGARRPAKAETARRLAGPGSTGPGSAVAATSPPRPSTAARPSRPSRR.

One can recognise a KRAB domain in the interval 14 to 85 (VSFEDVSVYF…DIPRTWATAG (72 aa)). A disordered region spans residues 86 to 125 (LHIGDRTQSKTSTSTQKHSGRQLPGADPQGGKEGQAARSS). 8 C2H2-type zinc fingers span residues 152-174 (YLCQQCGKAFSRSSNLIKHRIIH), 180-202 (YACPECGKLFRRSFALLEHQRIH), 208-230 (YACPECSKTFTRSSNLIKHQVIH), 236-258 (FACGDCGKLFRRSFALLEHARVH), 264-286 (YACPECGKAFSRSSNLIEHQRTH), 292-314 (YACGQCAKAFKGVSQLIHHQRSH), 320-342 (FACRECGKAFRGRSGLSQHRRVH), and 348-370 (YECSDCGKAFGRRANLFKHQAVH). Positions 368 to 416 (AVHGARRPAKAETARRLAGPGSTGPGSAVAATSPPRPSTAARPSRPSRR) are disordered. Residues 394-416 (SAVAATSPPRPSTAARPSRPSRR) show a composition bias toward low complexity.

It belongs to the krueppel C2H2-type zinc-finger protein family.

The protein resides in the nucleus. In terms of biological role, KRAB domain-containing zinc-finger protein that represses B1/Alu SINE transposable elements and modulates the transcription of nearby genes in a tissue-specific manner. It regulates glucose homeostasis and lipid metabolism by modulating the expression of the endocrine cell-defining transcription factor, MAFB, in pancreatic islets and, the fat metabolism regulator, ACACB, in adipose tissue and muscle. In Homo sapiens (Human), this protein is Zinc finger protein 92 homolog (ZFP92).